The following is a 518-amino-acid chain: Myosin-binding protein 7 (518 aa).

Positions asparagine 69 to lysine 167 constitute a GTD-binding domain. The tract at residues valine 276–methionine 350 is disordered. Over residues serine 291–threonine 301 the composition is skewed to low complexity. The span at serine 310–serine 320 shows a compositional bias: polar residues. Position 385 is a phosphoserine (serine 385). A coiled-coil region spans residues glutamate 399–methionine 431. The chain crosses the membrane as a helical span at residues isoleucine 458–tryptophan 477.

Interacts with myosin XI-I.

The protein resides in the endomembrane system. Functionally, membrane-anchored myosin receptors that define a distinct, plant-specific transport vesicle compartment. In Arabidopsis thaliana (Mouse-ear cress), this protein is Myosin-binding protein 7.